The primary structure comprises 239 residues: Small ribosomal subunit protein eS1 (239 aa).

The tract at residues 1–24 (MAIQPPGSYPQGNKKGKAKKKSGQ) is disordered.

Belongs to the eukaryotic ribosomal protein eS1 family. Component of the small ribosomal subunit. Mature ribosomes consist of a small (40S) and a large (60S) subunit. The 40S subunit contains about 33 different proteins and 1 molecule of RNA (18S). The 60S subunit contains about 49 different proteins and 3 molecules of RNA (25S, 5.8S and 5S).

It localises to the cytoplasm. This is Small ribosomal subunit protein eS1 from Encephalitozoon cuniculi (strain GB-M1) (Microsporidian parasite).